Here is a 217-residue protein sequence, read N- to C-terminus: MQCLRALLSFFTIIPAGVAKLDFKCAWALPYVVPPLVAGPAAAALWLGASPHVAYLLLLLMTGLNHLDGLADVADALMVRDRERARAVLEDPRRGTGGIFAVVATYAVATASTASPLQLLLAEVFSKALIVTVAAFSKPFKPGLGALFIDGARSTWPLALPALAVIICLRPAATLAALAVALALYAVAYQHLGGANGDVFGYLLEVSRVAYIVTWHM.

5 helical membrane-spanning segments follow: residues 6 to 26, 39 to 61, 95 to 115, 116 to 136, and 162 to 182; these read ALLS…FKCA, GPAA…LLLM, GTGG…STAS, PLQL…VAAF, and ALAV…AVAL.

This sequence belongs to the CobS family. Mg(2+) serves as cofactor.

The protein resides in the cell membrane. The catalysed reaction is alpha-ribazole + adenosylcob(III)inamide-GDP = adenosylcob(III)alamin + GMP + H(+). It catalyses the reaction alpha-ribazole 5'-phosphate + adenosylcob(III)inamide-GDP = adenosylcob(III)alamin 5'-phosphate + GMP + H(+). The protein operates within cofactor biosynthesis; adenosylcobalamin biosynthesis; adenosylcobalamin from cob(II)yrinate a,c-diamide: step 7/7. Functionally, joins adenosylcobinamide-GDP and alpha-ribazole to generate adenosylcobalamin (Ado-cobalamin). Also synthesizes adenosylcobalamin 5'-phosphate from adenosylcobinamide-GDP and alpha-ribazole 5'-phosphate. The protein is Adenosylcobinamide-GDP ribazoletransferase of Pyrobaculum calidifontis (strain DSM 21063 / JCM 11548 / VA1).